Reading from the N-terminus, the 551-residue chain is Cleavage and polyadenylation specificity factor subunit 6 (551 aa).

Residues 81-161 (IALYIGNLTW…QNPVVTPCNK (81 aa)) enclose the RRM domain. T157 bears the Phosphothreonine mark. Residues 169-180 (MQSRKTTQSGQM) show a composition bias toward polar residues. 2 disordered regions span residues 169–410 (MQSR…TPLS) and 477–551 (LHGI…YRHR). Composition is skewed to pro residues over residues 237-265 (TRPP…PLAG), 285-366 (GQPP…PPPA), and 377-388 (GPPPTDPYGRPP). 2 stretches are compositionally biased toward basic and acidic residues: residues 389-404 (PYDR…EMDA) and 489-503 (SRRE…SRSR). A phosphoserine mark is found at S494, S500, S511, S513, and S525. Basic residues predominate over residues 504–514 (EKSRRHKSRSR). Basic and acidic residues predominate over residues 515–551 (DRHDDYYRERSRERERHRDRDRDRDRERDREREYRHR).

It belongs to the RRM CPSF6/7 family. In terms of assembly, component of the cleavage factor Im (CFIm) complex.

It is found in the nucleus. Its subcellular location is the nucleoplasm. The protein resides in the nucleus speckle. The protein localises to the cytoplasm. Functionally, component of the cleavage factor Im (CFIm) complex that functions as an activator of the pre-mRNA 3'-end cleavage and polyadenylation processing required for the maturation of pre-mRNA into functional mRNAs. CFIm contributes to the recruitment of multiprotein complexes on specific sequences on the pre-mRNA 3'-end, so called cleavage and polyadenylation signals (pA signals). Most pre-mRNAs contain multiple pA signals, resulting in alternative cleavage and polyadenylation (APA) producing mRNAs with variable 3'-end formation. The CFIm complex acts as a key regulator of cleavage and polyadenylation site choice during APA through its binding to 5'-UGUA-3' elements localized in the 3'-untranslated region (UTR) for a huge number of pre-mRNAs. Plays a role in mRNA export. This chain is Cleavage and polyadenylation specificity factor subunit 6, found in Gallus gallus (Chicken).